A 94-amino-acid polypeptide reads, in one-letter code: Co-chaperonin GroES (94 aa).

It belongs to the GroES chaperonin family. In terms of assembly, heptamer of 7 subunits arranged in a ring. Interacts with the chaperonin GroEL.

The protein localises to the cytoplasm. Functionally, together with the chaperonin GroEL, plays an essential role in assisting protein folding. The GroEL-GroES system forms a nano-cage that allows encapsulation of the non-native substrate proteins and provides a physical environment optimized to promote and accelerate protein folding. GroES binds to the apical surface of the GroEL ring, thereby capping the opening of the GroEL channel. This is Co-chaperonin GroES from Clostridium botulinum.